Here is a 510-residue protein sequence, read N- to C-terminus: NEDD8-activating enzyme E1 regulatory subunit (510 aa).

Position 2 is an N-acetylalanine (Ala2). N6-acetyllysine is present on residues Lys6 and Lys317. An interaction with UBA3 region spans residues 307–320; sequence DMIADSGKYIKLQN.

It belongs to the ubiquitin-activating E1 family. ULA1 subfamily. In terms of assembly, heterodimer of UBA3 and NAE1. The complex binds NEDD8 and UBE2M. Binds APP and TP53BP2. Post-translationally, ubiquitinated by TRIP12, leading to its degradation by the proteasome.

It localises to the cell membrane. The protein operates within protein modification; protein neddylation. Binding of TP53BP2 to the regulatory subunit NAE1 decreases neddylation activity. Its function is as follows. Regulatory subunit of the dimeric UBA3-NAE1 E1 enzyme. E1 activates NEDD8 by first adenylating its C-terminal glycine residue with ATP, thereafter linking this residue to the side chain of the catalytic cysteine, yielding a NEDD8-UBA3 thioester and free AMP. E1 finally transfers NEDD8 to the catalytic cysteine of UBE2M. Necessary for cell cycle progression through the S-M checkpoint. Overexpression of NAE1 causes apoptosis through deregulation of NEDD8 conjugation. The covalent attachment of NEDD8 to target proteins is known as 'neddylation' and the process is involved in the regulation of cell growth, viability and development. The protein is NEDD8-activating enzyme E1 regulatory subunit (NAE1) of Macaca fascicularis (Crab-eating macaque).